A 302-amino-acid chain; its full sequence is Short-chain dehydrogenase/reductase 3 (302 aa).

4 helical membrane passes run leucine 9–leucine 29, isoleucine 170–threonine 190, alanine 195–threonine 215, and alanine 253–leucine 273. Position 175 (serine 175) interacts with substrate. Tyrosine 188 functions as the Proton acceptor in the catalytic mechanism.

The protein belongs to the short-chain dehydrogenases/reductases (SDR) family. As to expression, widely expressed with highest levels found in heart, placenta, lung, liver, kidney, pancreas, thyroid, testis, stomach, trachea and spinal cord. Lower levels found in skeletal muscle, intestine and lymph node. No expression detected in brain. In the retina, expressed in cone but not rod outer segments.

The protein resides in the membrane. It carries out the reaction all-trans-retinol + NADP(+) = all-trans-retinal + NADPH + H(+). In terms of biological role, catalyzes the reduction of all-trans-retinal to all-trans-retinol in the presence of NADPH. This Homo sapiens (Human) protein is Short-chain dehydrogenase/reductase 3 (DHRS3).